A 122-amino-acid polypeptide reads, in one-letter code: MIQTESRLEVADNTGAREVMCIKVLGGSKRRYASIGDIIKVSVKEATPRGRVKKGEIYNAVVVRTAKGVRRQDGSLIKFDGNAAVLLNNKLEPIGTRIFGPVTRELRSERFMKIVSLAPEVL.

It belongs to the universal ribosomal protein uL14 family. In terms of assembly, part of the 50S ribosomal subunit. Forms a cluster with proteins L3 and L19. In the 70S ribosome, L14 and L19 interact and together make contacts with the 16S rRNA in bridges B5 and B8.

Functionally, binds to 23S rRNA. Forms part of two intersubunit bridges in the 70S ribosome. The chain is Large ribosomal subunit protein uL14 from Burkholderia multivorans (strain ATCC 17616 / 249).